The chain runs to 298 residues: ATP-dependent Clp protease proteolytic subunit 5, chloroplastic (298 aa).

Residues 1–100 (MAHACVSTSA…SSPYFPAYAQ (100 aa)) constitute a chloroplast transit peptide. N-acetylglycine is present on Gly101. The Nucleophile role is filled by Ser193. Residue His218 is part of the active site.

The protein belongs to the peptidase S14 family. Component of the chloroplastic Clp protease core complex which consist of at least 16 proteins: CLPP4 (3 copies), CLPP5 (3 copies), CLPR4 (2 copies), ClpP1 (1 copy), CLPP6 (1 copy), CLPR2 (1 copy), CLPT1 (1 copy), CLPT2 (1 copy) and 3 copies of CLPP3 and/or CLPR1 and/or CLPR3. The core complex is organized in two heptameric rings, one containing CLPP3,4,5,6 in a 1:2:3:1 ratio and the other CLPP1 and CLPR1,2,3,4 in a 3:1:1:1:1 ratio. Interacts with CHIP. Ubiquitinated in vitro by CHIP. Mostly expressed in leaves. Also detected in stems, and to a lower extent, in roots (at protein level).

It localises to the plastid. The protein localises to the chloroplast stroma. The catalysed reaction is Hydrolysis of proteins to small peptides in the presence of ATP and magnesium. alpha-casein is the usual test substrate. In the absence of ATP, only oligopeptides shorter than five residues are hydrolyzed (such as succinyl-Leu-Tyr-|-NHMec, and Leu-Tyr-Leu-|-Tyr-Trp, in which cleavage of the -Tyr-|-Leu- and -Tyr-|-Trp bonds also occurs).. Cleaves peptides in various proteins in a process that requires ATP hydrolysis. Has a chymotrypsin-like activity. Plays a major role in the degradation of misfolded proteins. This chain is ATP-dependent Clp protease proteolytic subunit 5, chloroplastic, found in Arabidopsis thaliana (Mouse-ear cress).